The following is a 542-amino-acid chain: Apolipoprotein N-acyltransferase (542 aa).

6 consecutive transmembrane segments (helical) span residues Val-24 to Ala-44, Val-54 to Leu-74, Phe-85 to Val-105, Ala-116 to Leu-136, Phe-160 to Val-180, and Gly-190 to Leu-210. Residues Leu-220–Leu-499 enclose the CN hydrolase domain. Catalysis depends on Glu-264, which acts as the Proton acceptor. Lys-349 is an active-site residue. The Nucleophile role is filled by Cys-404. The helical transmembrane segment at Leu-509–Phe-529 threads the bilayer.

The protein belongs to the CN hydrolase family. Apolipoprotein N-acyltransferase subfamily.

It localises to the cell inner membrane. The catalysed reaction is N-terminal S-1,2-diacyl-sn-glyceryl-L-cysteinyl-[lipoprotein] + a glycerophospholipid = N-acyl-S-1,2-diacyl-sn-glyceryl-L-cysteinyl-[lipoprotein] + a 2-acyl-sn-glycero-3-phospholipid + H(+). It functions in the pathway protein modification; lipoprotein biosynthesis (N-acyl transfer). In terms of biological role, catalyzes the phospholipid dependent N-acylation of the N-terminal cysteine of apolipoprotein, the last step in lipoprotein maturation. This Chlamydia trachomatis serovar D (strain ATCC VR-885 / DSM 19411 / UW-3/Cx) protein is Apolipoprotein N-acyltransferase.